The primary structure comprises 264 residues: Thymidylate synthase (264 aa).

Arg21 contacts dUMP. His51 is a (6R)-5,10-methylene-5,6,7,8-tetrahydrofolate binding site. Residue 126 to 127 (RR) participates in dUMP binding. Cys146 acts as the Nucleophile in catalysis. DUMP-binding positions include 166–169 (RSCD), Asn177, and 207–209 (HLY). Residue Asp169 participates in (6R)-5,10-methylene-5,6,7,8-tetrahydrofolate binding. Ala263 is a binding site for (6R)-5,10-methylene-5,6,7,8-tetrahydrofolate.

The protein belongs to the thymidylate synthase family. Bacterial-type ThyA subfamily. Homodimer.

It localises to the cytoplasm. The enzyme catalyses dUMP + (6R)-5,10-methylene-5,6,7,8-tetrahydrofolate = 7,8-dihydrofolate + dTMP. Its pathway is pyrimidine metabolism; dTTP biosynthesis. Catalyzes the reductive methylation of 2'-deoxyuridine-5'-monophosphate (dUMP) to 2'-deoxythymidine-5'-monophosphate (dTMP) while utilizing 5,10-methylenetetrahydrofolate (mTHF) as the methyl donor and reductant in the reaction, yielding dihydrofolate (DHF) as a by-product. This enzymatic reaction provides an intracellular de novo source of dTMP, an essential precursor for DNA biosynthesis. In Serratia proteamaculans (strain 568), this protein is Thymidylate synthase.